The sequence spans 525 residues: Mitochondrial-processing peptidase subunit alpha (525 aa).

Residues 1–33 (MAAVVLAATRLLRGSGSWGCSRLRFGPPAYRRF) constitute a mitochondrion transit peptide. Residue K64 is modified to N6-succinyllysine. K299 carries the N6-acetyllysine modification.

Belongs to the peptidase M16 family. As to quaternary structure, heterodimer of PMPCA (alpha) and PMPCB (beta) subunits, forming the mitochondrial processing protease (MPP) in which PMPCA is involved in substrate recognition and binding and PMPCB is the catalytic subunit.

The protein resides in the mitochondrion matrix. It is found in the mitochondrion inner membrane. Functionally, substrate recognition and binding subunit of the essential mitochondrial processing protease (MPP), which cleaves the mitochondrial sequence off newly imported precursors proteins. The protein is Mitochondrial-processing peptidase subunit alpha (PMPCA) of Pongo abelii (Sumatran orangutan).